The sequence spans 384 residues: tRNA 2-selenouridine synthase (384 aa).

In terms of domain architecture, Rhodanese spans 15–138; sequence FVAGKPLIDL…MRQYLIGVIE (124 aa). The S-selanylcysteine intermediate role is filled by Cys98.

The protein belongs to the SelU family. As to quaternary structure, monomer.

It catalyses the reaction 5-methylaminomethyl-2-thiouridine(34) in tRNA + selenophosphate + (2E)-geranyl diphosphate + H2O + H(+) = 5-methylaminomethyl-2-selenouridine(34) in tRNA + (2E)-thiogeraniol + phosphate + diphosphate. It carries out the reaction 5-methylaminomethyl-2-thiouridine(34) in tRNA + (2E)-geranyl diphosphate = 5-methylaminomethyl-S-(2E)-geranyl-thiouridine(34) in tRNA + diphosphate. The enzyme catalyses 5-methylaminomethyl-S-(2E)-geranyl-thiouridine(34) in tRNA + selenophosphate + H(+) = 5-methylaminomethyl-2-(Se-phospho)selenouridine(34) in tRNA + (2E)-thiogeraniol. The catalysed reaction is 5-methylaminomethyl-2-(Se-phospho)selenouridine(34) in tRNA + H2O = 5-methylaminomethyl-2-selenouridine(34) in tRNA + phosphate. In terms of biological role, involved in the post-transcriptional modification of the uridine at the wobble position (U34) of tRNA(Lys), tRNA(Glu) and tRNA(Gln). Catalyzes the conversion of 2-thiouridine (S2U-RNA) to 2-selenouridine (Se2U-RNA). Acts in a two-step process involving geranylation of 2-thiouridine (S2U) to S-geranyl-2-thiouridine (geS2U) and subsequent selenation of the latter derivative to 2-selenouridine (Se2U) in the tRNA chain. This is tRNA 2-selenouridine synthase from Shewanella sp. (strain MR-4).